The sequence spans 561 residues: Glutamate--tRNA ligase (561 aa).

A 'HIGH' region motif is present at residues 107–117; sequence PNPSGPLHLGH.

Belongs to the class-I aminoacyl-tRNA synthetase family. Glutamate--tRNA ligase type 2 subfamily.

The protein localises to the cytoplasm. The catalysed reaction is tRNA(Glu) + L-glutamate + ATP = L-glutamyl-tRNA(Glu) + AMP + diphosphate. Functionally, catalyzes the attachment of glutamate to tRNA(Glu) in a two-step reaction: glutamate is first activated by ATP to form Glu-AMP and then transferred to the acceptor end of tRNA(Glu). This Methanospirillum hungatei JF-1 (strain ATCC 27890 / DSM 864 / NBRC 100397 / JF-1) protein is Glutamate--tRNA ligase.